The sequence spans 347 residues: MKSRPICSVIPPYILHRIIANGTDEQRHCAQQTLMHVQSLMVSHHPRPEPHEKLPAGQANRSIHDAEQQQQLPGKLVRAEGQPSNGDIAVDEAYSYLGVTYDFFWKIFQRNSLDAEGLPLAGTVHYGQDYQNAFWNGQQMVFGDGDGKIFNRFTIALDVVAHELTHGITENEAGLIYFRQSGALNESLSDVFGSMVKQYHLGQTTEQADWLIGAELLADGIHGMGLRSMSHPGTAYDDELLGIDPQPSHMNEYVNTREDNGGVHLNSGIPNRAFYLAAIALGGHSWEKAGRIWYDTLCDKTLPQNADFEIFARHTIQHAAKRFNHTVADIVQQSWETVGVEVRQEFL.

The N-terminal stretch at 1–20 (MKSRPICSVIPPYILHRIIA) is a signal peptide. The disordered stretch occupies residues 43-68 (SHHPRPEPHEKLPAGQANRSIHDAEQ). Residue histidine 162 coordinates Zn(2+). Residue glutamate 163 is part of the active site. The Zn(2+) site is built by histidine 166 and glutamate 186. Histidine 264 serves as the catalytic Proton donor.

Belongs to the peptidase M4 family. Requires Ca(2+) as cofactor. Zn(2+) is required as a cofactor.

Its subcellular location is the secreted. The polypeptide is Extracellular metalloprotease (prt1) (Pectobacterium carotovorum subsp. carotovorum (Erwinia carotovora subsp. carotovora)).